Consider the following 477-residue polypeptide: Peptidyl-prolyl cis-trans isomerase FKBP53 (477 aa).

Disordered regions lie at residues 104–135 (DYEHDEDDSDGIDVGESEEDDSCEYDSEEDEQ) and 153–366 (AAAP…QVRT). Over residues 264–274 (KSKKKKNQKEK) the composition is skewed to basic residues. Residues 299-321 (ISQISSNTKAQDGTANNAMSESS) are compositionally biased toward polar residues. Over residues 322-331 (KTPDKSAEKK) the composition is skewed to basic and acidic residues. The span at 351–366 (VEKQTPADSKSSQVRT) shows a compositional bias: polar residues. A PPIase FKBP-type domain is found at 389–477 (GKTVSVRYIG…TFDVELINVQ (89 aa)).

This sequence belongs to the FKBP-type PPIase family. Interacts with histone H3. In terms of tissue distribution, broadly expressed in leaves, flowers, stems and roots. Detected in root apical meristem region and pollen.

The protein localises to the nucleus. The enzyme catalyses [protein]-peptidylproline (omega=180) = [protein]-peptidylproline (omega=0). Its function is as follows. PPIases accelerate the folding of proteins. It catalyzes the cis-trans isomerization of proline imidic peptide bonds in oligopeptides. Histone chaperone possibly involved in H3/H4 deposition to the nucleosome. Associates with 18S rDNA chromatin and negatively regulates the level of its expression. The polypeptide is Peptidyl-prolyl cis-trans isomerase FKBP53 (FKBP53) (Arabidopsis thaliana (Mouse-ear cress)).